The following is a 113-amino-acid chain: Large ribosomal subunit protein uL22 (113 aa).

Belongs to the universal ribosomal protein uL22 family. In terms of assembly, part of the 50S ribosomal subunit.

In terms of biological role, this protein binds specifically to 23S rRNA; its binding is stimulated by other ribosomal proteins, e.g. L4, L17, and L20. It is important during the early stages of 50S assembly. It makes multiple contacts with different domains of the 23S rRNA in the assembled 50S subunit and ribosome. The globular domain of the protein is located near the polypeptide exit tunnel on the outside of the subunit, while an extended beta-hairpin is found that lines the wall of the exit tunnel in the center of the 70S ribosome. The sequence is that of Large ribosomal subunit protein uL22 from Neorickettsia sennetsu (strain ATCC VR-367 / Miyayama) (Ehrlichia sennetsu).